Reading from the N-terminus, the 110-residue chain is Replication initiation control protein YabA (110 aa).

Residues His-84, Cys-86, Cys-100, and Cys-103 each coordinate Zn(2+).

This sequence belongs to the YabA family. Homotetramer. Interacts with both DnaA and DnaN, acting as a bridge between these two proteins. The cofactor is Zn(2+).

The protein resides in the cytoplasm. It localises to the nucleoid. Involved in control of chromosome replication initiation. Inhibits the cooperative binding of DnaA to the oriC region, thus negatively regulating initiation of chromosome replication. Inhibits the ability of DnaA-ATP to form a helix on DNA; does not disassemble preformed DnaA-DNA helices. Decreases the residence time of DnaA on the chromosome at its binding sites (oriC, replication forks and promoter-binding sites). Tethers DnaA to the replication machinery via the DNA polymerase beta sliding clamp subunit (dnaN). Associates with oriC and other DnaA targets on the chromosome in a DnaA-dependent manner. The sequence is that of Replication initiation control protein YabA from Streptococcus mutans serotype c (strain ATCC 700610 / UA159).